A 393-amino-acid chain; its full sequence is Putative zinc metalloprotease Rip3 (393 aa).

Transmembrane regions (helical) follow at residues 10–30 (IAGF…LFTW) and 45–65 (AVVY…SLLA). Residue His66 coordinates Zn(2+). The active site involves Glu67. His70 is a binding site for Zn(2+). 4 helical membrane-spanning segments follow: residues 77 to 97 (AGVS…ALGG), 108 to 128 (IAFA…ALAI), 136 to 156 (PAIV…LGLF), and 207 to 227 (FVAG…FIFA). 2 CBS domains span residues 251 to 308 (MTAQ…RRST) and 315 to 376 (ALPL…AQPE).

It belongs to the peptidase M50B family. The cofactor is Zn(2+).

The protein localises to the cell membrane. The chain is Putative zinc metalloprotease Rip3 (rip3) from Mycobacterium tuberculosis (strain ATCC 35801 / TMC 107 / Erdman).